The chain runs to 476 residues: Cysteine--tRNA ligase (476 aa).

Residue Cys29 coordinates Zn(2+). The 'HIGH' region motif lies at 31 to 41 (PTVYDYPHLGH). The Zn(2+) site is built by Cys209, His234, and Glu238. A 'KMSKS' region motif is present at residues 266-270 (KMSKS). Residue Lys269 participates in ATP binding.

The protein belongs to the class-I aminoacyl-tRNA synthetase family. Zn(2+) is required as a cofactor.

The protein resides in the cytoplasm. It carries out the reaction tRNA(Cys) + L-cysteine + ATP = L-cysteinyl-tRNA(Cys) + AMP + diphosphate. The sequence is that of Cysteine--tRNA ligase (cysS) from Pyrococcus horikoshii (strain ATCC 700860 / DSM 12428 / JCM 9974 / NBRC 100139 / OT-3).